The following is a 671-amino-acid chain: Acetyl-coenzyme A synthetase 1 (671 aa).

Residues 210–213 (RGGK) and Thr329 each bind CoA. Residues 405–407 (GEP), 429–434 (DTYWQT), Asp520, and Arg535 contribute to the ATP site. Ser543 lines the CoA pocket. Arg546 serves as a coordination point for ATP. Position 605 (Arg605) interacts with CoA.

Belongs to the ATP-dependent AMP-binding enzyme family.

The enzyme catalyses acetate + ATP + CoA = acetyl-CoA + AMP + diphosphate. The protein is Acetyl-coenzyme A synthetase 1 (ACS1) of Debaryomyces hansenii (strain ATCC 36239 / CBS 767 / BCRC 21394 / JCM 1990 / NBRC 0083 / IGC 2968) (Yeast).